The following is a 322-amino-acid chain: Ribose-phosphate pyrophosphokinase 1 (322 aa).

ATP-binding positions include 39–41 and 98–99; these read DGE and RQ. Mg(2+)-binding residues include His-132 and Asp-173. The active site involves Lys-196. D-ribose 5-phosphate-binding positions include Arg-198, Asp-224, and 228–232; that span reads DTAGT.

This sequence belongs to the ribose-phosphate pyrophosphokinase family. Class I subfamily. As to quaternary structure, homohexamer. Mg(2+) is required as a cofactor.

The protein localises to the cytoplasm. It carries out the reaction D-ribose 5-phosphate + ATP = 5-phospho-alpha-D-ribose 1-diphosphate + AMP + H(+). It functions in the pathway metabolic intermediate biosynthesis; 5-phospho-alpha-D-ribose 1-diphosphate biosynthesis; 5-phospho-alpha-D-ribose 1-diphosphate from D-ribose 5-phosphate (route I): step 1/1. In terms of biological role, involved in the biosynthesis of the central metabolite phospho-alpha-D-ribosyl-1-pyrophosphate (PRPP) via the transfer of pyrophosphoryl group from ATP to 1-hydroxyl of ribose-5-phosphate (Rib-5-P). In Streptococcus pneumoniae serotype 4 (strain ATCC BAA-334 / TIGR4), this protein is Ribose-phosphate pyrophosphokinase 1.